A 332-amino-acid chain; its full sequence is Cell growth regulator with RING finger domain protein 1 (332 aa).

The segment at Cys-274–Arg-309 adopts an RING-type zinc-finger fold.

Highly expressed in testis, lower levels of expression is seen in skeletal muscle, liver, lung and brain.

It is found in the nucleus. Its subcellular location is the endoplasmic reticulum. In terms of biological role, able to inhibit growth in several cell lines. The polypeptide is Cell growth regulator with RING finger domain protein 1 (Cgrrf1) (Rattus norvegicus (Rat)).